We begin with the raw amino-acid sequence, 64 residues long: MAVQKSRVTPSRRGQRRSHDALSAKQLSTDPTTGEVHLRHHITADGFYRGKKVIQTKTSAVEED.

A disordered region spans residues 1–36; the sequence is MAVQKSRVTPSRRGQRRSHDALSAKQLSTDPTTGEV.

This sequence belongs to the bacterial ribosomal protein bL32 family.

The chain is Large ribosomal subunit protein bL32 from Stenotrophomonas maltophilia (strain K279a).